Here is a 112-residue protein sequence, read N- to C-terminus: Protein GAST1 (112 aa).

The signal sequence occupies residues 1-25 (MAGKMSIVLFVLLVVFLTQNQVSRA).

It belongs to the GASA family. Six disulfide bonds may be present. As to expression, all shoot organs.

The protein localises to the secreted. The protein is Protein GAST1 (GAST1) of Solanum lycopersicum (Tomato).